A 557-amino-acid chain; its full sequence is Aerobic glycerol-3-phosphate dehydrogenase (557 aa).

Asp21–Glu49 is a binding site for FAD.

The protein belongs to the FAD-dependent glycerol-3-phosphate dehydrogenase family. FAD is required as a cofactor.

The protein localises to the cytoplasm. The catalysed reaction is a quinone + sn-glycerol 3-phosphate = dihydroxyacetone phosphate + a quinol. The protein operates within polyol metabolism; glycerol degradation via glycerol kinase pathway; glycerone phosphate from sn-glycerol 3-phosphate (aerobic route): step 1/1. The chain is Aerobic glycerol-3-phosphate dehydrogenase (glpD) from Staphylococcus aureus (strain MRSA252).